A 253-amino-acid polypeptide reads, in one-letter code: Chemokine-binding protein (253 aa).

Residues 1-17 (MKQYIVLACMCLAAAAM) form the signal peptide. The interval 62-87 (TEITESESDPEVESEDDSTSVEDVDP) is disordered. Residues 65–86 (TESESDPEVESEDDSTSVEDVD) are compositionally biased toward acidic residues.

Belongs to the orthopoxvirus OPG001 family. Binds to host CC chemokines, such as RANTES/CCL5, MIP-1alpha/CCL3, MCP-1/CCL2 and eotaxin.

It is found in the secreted. Its function is as follows. Inhibits host immune defense by binding to host chemokines. Binds host CC chemokines (beta chemokines) such as RANTES with high affinity, but not CXC or C chemokines (alpha and gamma chemokines). This Variola virus (isolate Human/India/Ind3/1967) (VARV) protein is Chemokine-binding protein (OPG001).